The primary structure comprises 266 residues: Prolactin-7A1 (266 aa).

A signal peptide spans 1-30; the sequence is MPLSFTQPCSSGALLLLVVSNLLLWENVAC. N-linked (GlcNAc...) asparagine glycans are attached at residues Asn36, Asn58, Asn110, Asn149, and Asn157. Cystine bridges form between Cys114/Cys231 and Cys248/Cys257.

The protein belongs to the somatotropin/prolactin family. As to expression, expressed specifically in the placenta. Detected only in the trophoblast giant cells.

The protein localises to the secreted. The polypeptide is Prolactin-7A1 (Prl7a1) (Mus musculus (Mouse)).